We begin with the raw amino-acid sequence, 1336 residues long: SH3 domain and tetratricopeptide repeat-containing protein 1 (1336 aa).

Met1 is modified (N-acetylmethionine). Disordered regions lie at residues Met1–Gln76 and Thr225–Val266. The span at Gly18 to Ser27 shows a compositional bias: gly residues. A compositionally biased stretch (basic and acidic residues) spans Ala46–Pro61. Composition is skewed to low complexity over residues Pro62–Pro74 and Glu247–Val266. One can recognise an SH3 domain in the interval Met305–Pro368. TPR repeat units lie at residues Ala560–Ser593, Val601–Thr634, Ala665–Ser698, Gly786–Ala819, Gly863–Leu896, Thr946–Met979, Gly1027–Leu1063, and Arg1192–Pro1225. Tyr1248 carries the phosphotyrosine modification. One copy of the TPR 9 repeat lies at Leu1277–Leu1311.

In Homo sapiens (Human), this protein is SH3 domain and tetratricopeptide repeat-containing protein 1 (SH3TC1).